Here is a 167-residue protein sequence, read N- to C-terminus: Large ribosomal subunit protein bL9 (167 aa).

This sequence belongs to the bacterial ribosomal protein bL9 family.

Its function is as follows. Binds to the 23S rRNA. The sequence is that of Large ribosomal subunit protein bL9 from Chlamydia trachomatis serovar L2 (strain ATCC VR-902B / DSM 19102 / 434/Bu).